The chain runs to 259 residues: Phosphatidylglycerol--prolipoprotein diacylglyceryl transferase (259 aa).

Helical transmembrane passes span 9 to 29 (IIFSIGPLAVSWYSLSYVVGI), 55 to 75 (FITYAVIGIIVGGRLGFVLLY), 92 to 112 (EGGMSFHGGALGVIIAAYLFC), and 117 to 137 (INFLSLTDIIAPVVPIGLFLG). Arg138 contributes to the a 1,2-diacyl-sn-glycero-3-phospho-(1'-sn-glycerol) binding site. The next 3 helical transmembrane spans lie at 172-192 (QLYEAFFEGLVLFCILAYATF), 201-221 (GLNSGIFLIFYALFRIAIEIF), and 228-248 (IGFILDSLTMGQILSVPMLLL).

Belongs to the Lgt family.

The protein localises to the cell inner membrane. It catalyses the reaction L-cysteinyl-[prolipoprotein] + a 1,2-diacyl-sn-glycero-3-phospho-(1'-sn-glycerol) = an S-1,2-diacyl-sn-glyceryl-L-cysteinyl-[prolipoprotein] + sn-glycerol 1-phosphate + H(+). The protein operates within protein modification; lipoprotein biosynthesis (diacylglyceryl transfer). Functionally, catalyzes the transfer of the diacylglyceryl group from phosphatidylglycerol to the sulfhydryl group of the N-terminal cysteine of a prolipoprotein, the first step in the formation of mature lipoproteins. The sequence is that of Phosphatidylglycerol--prolipoprotein diacylglyceryl transferase from Rickettsia felis (strain ATCC VR-1525 / URRWXCal2) (Rickettsia azadi).